The following is a 492-amino-acid chain: NAD(P)H-quinone oxidoreductase subunit 2 A, chloroplastic (492 aa).

The next 13 membrane-spanning stretches (helical) occupy residues 6-26, 39-59, 81-101, 106-126, 131-151, 165-185, 209-229, 277-297, 305-325, 336-356, 377-397, 400-420, and 464-484; these read LLLF…GLIL, ISWF…ALLF, IFQF…VEYI, MAIT…MFLC, LITI…LSGY, YLLM…WLYG, PGIL…LSPA, WHLL…LIAI, MLAY…IVGD, YMLF…SFGL, ALSL…AGFF, LHLF…IGLL, and FSMI…NPII.

It belongs to the complex I subunit 2 family. NDH is composed of at least 16 different subunits, 5 of which are encoded in the nucleus.

Its subcellular location is the plastid. It localises to the chloroplast thylakoid membrane. It catalyses the reaction a plastoquinone + NADH + (n+1) H(+)(in) = a plastoquinol + NAD(+) + n H(+)(out). The enzyme catalyses a plastoquinone + NADPH + (n+1) H(+)(in) = a plastoquinol + NADP(+) + n H(+)(out). In terms of biological role, NDH shuttles electrons from NAD(P)H:plastoquinone, via FMN and iron-sulfur (Fe-S) centers, to quinones in the photosynthetic chain and possibly in a chloroplast respiratory chain. The immediate electron acceptor for the enzyme in this species is believed to be plastoquinone. Couples the redox reaction to proton translocation, and thus conserves the redox energy in a proton gradient. The polypeptide is NAD(P)H-quinone oxidoreductase subunit 2 A, chloroplastic (Phaseolus vulgaris (Kidney bean)).